A 203-amino-acid chain; its full sequence is Glycerol-3-phosphate acyltransferase (203 aa).

Transmembrane regions (helical) follow at residues 5-25 (IYIAALVIGYLFGSIPFGLIL), 55-75 (LAAATLLLDALKGTAAVIVAA), 84-104 (IAANAAMLAALGAFLGHLFPV), 118-138 (IGVLIGLFWPAAVVFCIMWLA), and 159-179 (IFLWWFGHDSLASLFAVLTLL).

This sequence belongs to the PlsY family. As to quaternary structure, probably interacts with PlsX.

Its subcellular location is the cell inner membrane. The catalysed reaction is an acyl phosphate + sn-glycerol 3-phosphate = a 1-acyl-sn-glycero-3-phosphate + phosphate. The protein operates within lipid metabolism; phospholipid metabolism. Functionally, catalyzes the transfer of an acyl group from acyl-phosphate (acyl-PO(4)) to glycerol-3-phosphate (G3P) to form lysophosphatidic acid (LPA). This enzyme utilizes acyl-phosphate as fatty acyl donor, but not acyl-CoA or acyl-ACP. The chain is Glycerol-3-phosphate acyltransferase from Rhodopseudomonas palustris (strain ATCC BAA-98 / CGA009).